The following is a 469-amino-acid chain: Actin-related protein 4 (469 aa).

A disordered region spans residues Pro104–Thr136. Over residues Asp119 to Thr136 the composition is skewed to acidic residues.

This sequence belongs to the actin family. ARP4 subfamily. As to quaternary structure, component of the NuA4 histone acetyltransferase complex, of the INO80 chromatin remodeling complex, and of the SWR1 chromatin remodeling complex.

It localises to the nucleus. Functionally, chromatin interaction component of the NuA4 histone acetyltransferase complex which is involved in transcriptional activation of selected genes principally by acetylation of nucleosomal histone H4 and H2A. The NuA4 complex is also involved in DNA repair. Is required for NuA4 complex integrity. Component of the SWR1 complex which mediates the ATP-dependent exchange of histone H2A for the H2A variant H2A.Z leading to transcriptional regulation of selected genes by chromatin remodeling. Component of the INO80 complex which remodels chromatin by shifting nucleosomes and is involved in DNA repair. The sequence is that of Actin-related protein 4 (arp-4) from Neurospora crassa (strain ATCC 24698 / 74-OR23-1A / CBS 708.71 / DSM 1257 / FGSC 987).